Reading from the N-terminus, the 332-residue chain is MKVTFEQLKAAFNRVLISRGVDNETADACAEMFARTTESGVYSHGVNRFPRFIQQLENGDIIPDAQPKRITSLGAIEQWDAQRSIGNLTAKKMMDRAIELAADHGIGLVALRNANHWMRGGSYGWQAAEKGYIGICWTNSIAVMPPWGAKECRIGTNPLIVAIPSTPITMVDMSMSMFSYGMLEVNRLAGRQLPVDGGFDDEGNLTKEPGVIEKNRRILPMGYWKGSGMSIVLDMIATLLSDGASVAEVTEDNSDEYGISQIFIAIEVDKLIDGPTRDAKLQRIMDYVTSAERADENQAIRLPGHEFTTLLAENRRNGITVDDSVWAKIQAL.

The Proton donor role is filled by His44. NAD(+) is bound by residues 168-174 (ITMVDMS), 224-225 (WK), and 304-306 (GHE).

This sequence belongs to the LDH2/MDH2 oxidoreductase family. DlgD subfamily. As to quaternary structure, homodimer.

The protein resides in the cytoplasm. It catalyses the reaction 3-dehydro-L-gulonate + NAD(+) = 2,3-dioxo-L-gulonate + NADH + H(+). The catalysed reaction is 3-dehydro-L-gulonate + NADP(+) = 2,3-dioxo-L-gulonate + NADPH + H(+). Its function is as follows. Catalyzes the reduction of 2,3-diketo-L-gulonate in the presence of NADH, to form 3-keto-L-gulonate. The protein is 2,3-diketo-L-gulonate reductase of Escherichia coli O1:K1 / APEC.